The primary structure comprises 392 residues: uncharacterized protein (392 aa).

This sequence belongs to the hcp1 family.

This is an uncharacterized protein from Escherichia coli (strain K12).